The chain runs to 340 residues: MRVYYDRDCDVNLIKDMKVAILGYGSQGHAHALNLRDSGAKNLAVALREGSASAAKAEGEGLQVMGIAEAAAWADLIMFTMPDELQAETYKKYVHDNIREGAAIAFAHGLNVHFGLIEPKEGIDVIMMAPKGPGHTVRGEYTKGGGVPCLVAVDKDASGRALEIGLSYCSAIGGGRSGIIETNFREECETDLFGEQAVLCGGLVELIRMGFETLVEAGYAPEMAYFECLHEVKLIVDLIYEGGIANMNYSISNTAEYGEYVSGPRVLPYDETKARMKAILTDIQNGKFVRDFMQENAVGQPHFKATRRINDEHQIEATGETLRGMMPWISAGKMVDKSKN.

A KARI N-terminal Rossmann domain is found at 1-182; that stretch reads MRVYYDRDCD…GGGRSGIIET (182 aa). Residues 24–27, arginine 48, serine 51, serine 53, and 83–86 contribute to the NADP(+) site; these read YGSQ and DELQ. Residue histidine 108 is part of the active site. Residue glycine 134 coordinates NADP(+). The region spanning 183 to 329 is the KARI C-terminal knotted domain; that stretch reads NFREECETDL…ETLRGMMPWI (147 aa). Mg(2+)-binding residues include aspartate 191, glutamate 195, glutamate 227, and glutamate 231. Residue serine 252 participates in substrate binding.

The protein belongs to the ketol-acid reductoisomerase family. The cofactor is Mg(2+).

It catalyses the reaction (2R)-2,3-dihydroxy-3-methylbutanoate + NADP(+) = (2S)-2-acetolactate + NADPH + H(+). It carries out the reaction (2R,3R)-2,3-dihydroxy-3-methylpentanoate + NADP(+) = (S)-2-ethyl-2-hydroxy-3-oxobutanoate + NADPH + H(+). It participates in amino-acid biosynthesis; L-isoleucine biosynthesis; L-isoleucine from 2-oxobutanoate: step 2/4. It functions in the pathway amino-acid biosynthesis; L-valine biosynthesis; L-valine from pyruvate: step 2/4. Involved in the biosynthesis of branched-chain amino acids (BCAA). Catalyzes an alkyl-migration followed by a ketol-acid reduction of (S)-2-acetolactate (S2AL) to yield (R)-2,3-dihydroxy-isovalerate. In the isomerase reaction, S2AL is rearranged via a Mg-dependent methyl migration to produce 3-hydroxy-3-methyl-2-ketobutyrate (HMKB). In the reductase reaction, this 2-ketoacid undergoes a metal-dependent reduction by NADPH to yield (R)-2,3-dihydroxy-isovalerate. The protein is Ketol-acid reductoisomerase (NADP(+)) of Roseobacter denitrificans (strain ATCC 33942 / OCh 114) (Erythrobacter sp. (strain OCh 114)).